The chain runs to 432 residues: Glutamate-1-semialdehyde 2,1-aminomutase (432 aa).

Lys-270 is modified (N6-(pyridoxal phosphate)lysine).

This sequence belongs to the class-III pyridoxal-phosphate-dependent aminotransferase family. HemL subfamily. As to quaternary structure, homodimer. Pyridoxal 5'-phosphate serves as cofactor.

The protein localises to the cytoplasm. The catalysed reaction is (S)-4-amino-5-oxopentanoate = 5-aminolevulinate. Its pathway is porphyrin-containing compound metabolism; protoporphyrin-IX biosynthesis; 5-aminolevulinate from L-glutamyl-tRNA(Glu): step 2/2. In Acinetobacter baumannii (strain ACICU), this protein is Glutamate-1-semialdehyde 2,1-aminomutase.